The chain runs to 172 residues: Large ribosomal subunit protein uL10 (172 aa).

This sequence belongs to the universal ribosomal protein uL10 family. Part of the ribosomal stalk of the 50S ribosomal subunit. The N-terminus interacts with L11 and the large rRNA to form the base of the stalk. The C-terminus forms an elongated spine to which L12 dimers bind in a sequential fashion forming a multimeric L10(L12)X complex.

Its function is as follows. Forms part of the ribosomal stalk, playing a central role in the interaction of the ribosome with GTP-bound translation factors. The polypeptide is Large ribosomal subunit protein uL10 (Methylorubrum populi (strain ATCC BAA-705 / NCIMB 13946 / BJ001) (Methylobacterium populi)).